The primary structure comprises 345 residues: Type II methyltransferase M.AplI (345 aa).

In terms of domain architecture, SAM-dependent MTase C5-type spans L25 to K325. Residue C93 is part of the active site.

It belongs to the class I-like SAM-binding methyltransferase superfamily. C5-methyltransferase family.

The catalysed reaction is a 2'-deoxycytidine in DNA + S-adenosyl-L-methionine = a 5-methyl-2'-deoxycytidine in DNA + S-adenosyl-L-homocysteine + H(+). In terms of biological role, a methylase, recognizes the double-stranded sequence 5'-CTGCAG-3', methylates C-4 on both strands, and protects the DNA from cleavage by the AplI endonuclease. In Arthrospira platensis (strain NIES-39 / UTEX 3086 / IAM M-135) (Spirulina platensis), this protein is Type II methyltransferase M.AplI (aplIM).